The sequence spans 1115 residues: Integrin alpha-PS3 (1115 aa).

A signal peptide spans 1 to 24 (MNAESTMFPHIFLALLALISHIEA). The Extracellular segment spans residues 25–1054 (FNFMPRPSRV…PNIISKHQET (1030 aa)). FG-GAP repeat units follow at residues 39–99 (KHLK…VCSP), 113–174 (SEYT…STPQ), 193–246 (DNGN…VDNP), 278–335 (IPTP…GKSI), 336–397 (HKYH…FNFE), 398–453 (RQIL…GLRD), and 460–522 (DAPS…SESR). 3 N-linked (GlcNAc...) asparagine glycosylation sites follow: asparagine 46, asparagine 82, and asparagine 166. An N-linked (GlcNAc...) asparagine glycan is attached at asparagine 438. N-linked (GlcNAc...) asparagine glycans are attached at residues asparagine 696, asparagine 845, asparagine 868, and asparagine 964. The helical transmembrane segment at 1055–1075 (GLPIWIIIVSVIGGLLLLSAI) threads the bilayer. The Cytoplasmic segment spans residues 1076 to 1115 (SYLLYKFGFFNRTKKDELDRLVQQNPVEPEAENLNSGGNN).

The protein belongs to the integrin alpha chain family. As to quaternary structure, heterodimer of an alpha and a beta subunit. The alpha subunit is composed of a heavy and a light chain linked by a disulfide bond. Interacts with mys/beta-PS and Itgbn. In terms of tissue distribution, expressed in embryonic and larval hemocytes (at protein level). Expressed in tissues undergoing invagination, tissue movement and morphogenesis such as salivary gland, trachea, midgut endoderm, dorsal vessel, midline of the ventral nerve cord, amnioserosa and the amnioproctodeal invagination. Expressed in the mushroom body neuropil, brain areas that contain mushroom body processes in synaptic contact with other neurons. In egg chambers, expressed in border cells, in stretch cells and in dorsal appendage primordia.

It localises to the apical cell membrane. The protein resides in the lateral cell membrane. The protein localises to the cytoplasm. Its function is as follows. Integrin alpha-PS3/beta-PS is a receptor for laminin. Also binds to wb. Important during embryogenesis for the development of the trachea, dorsal vessel and salivary gland, as well as for dorsal closure. Required for short-term memory processes. Minor involvement in the establishment of the oocyte anterior-posterior length. Plays a role in timely border cell migration during oogenesis, probably mediated by JNK signaling. Integrin alpha-PS3/Itgbn is required for effective phagocytosis of apoptotic cells during embryonic development and for the phagocytic elimination of S.aureus by mediating the binding of S.aureus peptidoglycan to larval hemocytes, which probably activates a signaling pathway involving Rac1 and Rac2. Integrin alpha-PS3/Itgbn also regulates Fak activity during neuromuscular junction (NMJ) growth and is required for its activation in presynapsis of NMJs. Seems to be dispensable for major morphogenetic processes. This is Integrin alpha-PS3 (scb) from Drosophila melanogaster (Fruit fly).